Here is a 384-residue protein sequence, read N- to C-terminus: GTPase Obg (384 aa).

One can recognise an Obg domain in the interval 1-159 (MKFIDEAKIE…RSLQLELKVL (159 aa)). Residues 20 to 46 (ATSFRREKFVPRGGPDGGDGGKGGSVW) are disordered. Residues 33-43 (GPDGGDGGKGG) are compositionally biased toward gly residues. An OBG-type G domain is found at 160 to 348 (ADVGLLGMPN…LVHQINQYLT (189 aa)). Residues 166–173 (GMPNAGKS), 191–195 (FTTLH), 213–216 (DIPG), 284–287 (NKLD), and 329–331 (SAL) contribute to the GTP site. Residues serine 173 and threonine 193 each contribute to the Mg(2+) site.

The protein belongs to the TRAFAC class OBG-HflX-like GTPase superfamily. OBG GTPase family. In terms of assembly, monomer. It depends on Mg(2+) as a cofactor.

The protein resides in the cytoplasm. In terms of biological role, an essential GTPase which binds GTP, GDP and possibly (p)ppGpp with moderate affinity, with high nucleotide exchange rates and a fairly low GTP hydrolysis rate. Plays a role in control of the cell cycle, stress response, ribosome biogenesis and in those bacteria that undergo differentiation, in morphogenesis control. This Neisseria meningitidis serogroup C (strain 053442) protein is GTPase Obg.